A 56-amino-acid chain; its full sequence is Large ribosomal subunit protein eL40 (56 aa).

The protein belongs to the eukaryotic ribosomal protein eL40 family.

The sequence is that of Large ribosomal subunit protein eL40 from Metallosphaera sedula (strain ATCC 51363 / DSM 5348 / JCM 9185 / NBRC 15509 / TH2).